Reading from the N-terminus, the 143-residue chain is uncharacterized protein (143 aa).

The first 32 residues, 1–32, serve as a signal peptide directing secretion; it reads MITNLRRRTAMAAAGLGAALGLGILLVPTVDA.

The protein to M.tuberculosis Rv1269c.

This is an uncharacterized protein from Mycobacterium tuberculosis (strain CDC 1551 / Oshkosh).